The following is an 89-amino-acid chain: FXYD domain-containing ion transport regulator 4 (89 aa).

The first 20 residues, 1–20 (MERVTLALLLLAGLTALEAN), serve as a signal peptide directing secretion. Residues 21–38 (DPFANKDDPFYYDWKNLQ) are Extracellular-facing. Residues 39–59 (LSGLICGGLLAIAGIAAVLSG) form a helical membrane-spanning segment. At 60-89 (KCKCKSSQKQHSPVPEKAIPLITPGSATTC) the chain is on the cytoplasmic side.

The protein belongs to the FXYD family. Regulatory subunit of the sodium/potassium-transporting ATPase which is composed of a catalytic alpha subunit, a non-catalytic beta subunit and a regulatory subunit. The regulatory subunit, a member of the FXYD protein family, modulates the enzymatic activity in a tissue- and isoform-specific way by changing affinities of the Na+/K+-ATPase toward Na(+), K(+) or ATP.

The protein resides in the cell membrane. Its subcellular location is the basolateral cell membrane. Associates with and regulates the activity of the sodium/potassium-transporting ATPase (NKA) which catalyzes the hydrolysis of ATP coupled with the exchange of Na(+) and K(+) ions across the plasma membrane. Increases the apparent affinity of the transporter for Na(+) and increases NKA activity. The chain is FXYD domain-containing ion transport regulator 4 (FXYD4) from Homo sapiens (Human).